We begin with the raw amino-acid sequence, 343 residues long: Major capsid protein VP1 (343 aa).

Belongs to the polyomaviruses coat protein VP1 family. As to quaternary structure, homomultimer; disulfide-linked. The virus capsid is composed of 72 icosahedral units, each one composed of five disulfide-linked copies of VP1. Interacts with minor capsid proteins VP2 and VP3.

Its subcellular location is the virion. It localises to the host nucleus. Functionally, forms an icosahedral capsid with a T=7 symmetry and a 46-48 nm diameter. The capsid is composed of 72 pentamers linked to each other by disulfide bonds and associated with VP2 or VP3 proteins. Interacts with sialic acids on the cell surface to provide virion attachment to target cell. Once attached, the virion is internalized by endocytosis and traffics to the endoplasmic reticulum. Inside the endoplasmic reticulum, the protein folding machinery isomerizes VP1 interpentamer disulfide bonds, thereby triggering initial uncoating. Next, the virion uses the endoplasmic reticulum-associated degradation machinery to probably translocate in the cytosol before reaching the nucleus. Nuclear entry of the viral DNA involves the selective exposure and importin recognition of VP2/Vp3 nuclear localization signal. In late phase of infection, neo-synthesized VP1 encapsulates replicated genomic DNA in the nucleus, and participates in rearranging nucleosomes around the viral DNA. In Psittacidae (parrots), this protein is Major capsid protein VP1.